The sequence spans 584 residues: Cytosolic Fe-S cluster assembly factor NAR1 (584 aa).

[4Fe-4S] cluster-binding residues include cysteine 20, cysteine 81, cysteine 84, cysteine 87, cysteine 190, cysteine 245, cysteine 465, and cysteine 469.

Belongs to the NARF family.

In terms of biological role, component of the cytosolic Fe/S protein assembly machinery. Required for maturation of extramitochondrial Fe/S proteins. May play a role in the transfer of pre-assembled Fe/S clusters to target apoproteins. The sequence is that of Cytosolic Fe-S cluster assembly factor NAR1 (NAR1) from Candida dubliniensis (strain CD36 / ATCC MYA-646 / CBS 7987 / NCPF 3949 / NRRL Y-17841) (Yeast).